The following is a 347-amino-acid chain: Anthranilate phosphoribosyltransferase (347 aa).

5-phospho-alpha-D-ribose 1-diphosphate contacts are provided by residues G88, 91–92, T96, 98–101, 116–124, and S128; these read GD, NIST, and KHGNRAASS. G88 provides a ligand contact to anthranilate. S100 serves as a coordination point for Mg(2+). Anthranilate is bound at residue N119. An anthranilate-binding site is contributed by R174. Positions 233 and 234 each coordinate Mg(2+).

This sequence belongs to the anthranilate phosphoribosyltransferase family. As to quaternary structure, homodimer. Requires Mg(2+) as cofactor.

The enzyme catalyses N-(5-phospho-beta-D-ribosyl)anthranilate + diphosphate = 5-phospho-alpha-D-ribose 1-diphosphate + anthranilate. It functions in the pathway amino-acid biosynthesis; L-tryptophan biosynthesis; L-tryptophan from chorismate: step 2/5. Functionally, catalyzes the transfer of the phosphoribosyl group of 5-phosphorylribose-1-pyrophosphate (PRPP) to anthranilate to yield N-(5'-phosphoribosyl)-anthranilate (PRA). This is Anthranilate phosphoribosyltransferase from Rhodospirillum rubrum (strain ATCC 11170 / ATH 1.1.1 / DSM 467 / LMG 4362 / NCIMB 8255 / S1).